The primary structure comprises 271 residues: Shikimate dehydrogenase (NADP(+)) (271 aa).

Residues 14–16 and threonine 61 contribute to the shikimate site; that span reads SRS. The active-site Proton acceptor is lysine 65. Shikimate-binding residues include asparagine 86 and aspartate 102. NADP(+) is bound by residues 126 to 130, 149 to 154, and methionine 213; these read GAGGA and NRTFSR. Tyrosine 215 serves as a coordination point for shikimate. Glycine 238 provides a ligand contact to NADP(+).

The protein belongs to the shikimate dehydrogenase family. In terms of assembly, homodimer.

The catalysed reaction is shikimate + NADP(+) = 3-dehydroshikimate + NADPH + H(+). Its pathway is metabolic intermediate biosynthesis; chorismate biosynthesis; chorismate from D-erythrose 4-phosphate and phosphoenolpyruvate: step 4/7. Functionally, involved in the biosynthesis of the chorismate, which leads to the biosynthesis of aromatic amino acids. Catalyzes the reversible NADPH linked reduction of 3-dehydroshikimate (DHSA) to yield shikimate (SA). The protein is Shikimate dehydrogenase (NADP(+)) of Histophilus somni (strain 129Pt) (Haemophilus somnus).